The chain runs to 276 residues: Small ribosomal subunit protein uS2 (276 aa).

A disordered region spans residues 226–276 (KKAREERQLAAAREAAGEPKSEDAPAEAAATEEAPATEAPAAEAQQENAAE). The span at 251–276 (AEAAATEEAPATEAPAAEAQQENAAE) shows a compositional bias: low complexity.

The protein belongs to the universal ribosomal protein uS2 family.

This is Small ribosomal subunit protein uS2 from Corynebacterium efficiens (strain DSM 44549 / YS-314 / AJ 12310 / JCM 11189 / NBRC 100395).